The primary structure comprises 356 residues: MILFGSTGSIGVNALKLAALKNIPISALACGDNIALLNEQIARFKPKFVAIKDSKNKHLVKHDRVFIGQEGLEQILTECQDKLLFNAIVGFAGLKSTLKAKELGKNIALANKESLVVAGSFLKGVKFLPVDSEHAALKFLLEGKKNIAKLYITASGGAFYRYKIKDLNQVSVKDALKHPNWNMGAKITIDSATMANKLFEIIEAYHLYDFKEIDALIEPRSLVHAMCEFKNGASTAYFSKADMKLAISDAIFEKQDTPILEAVDFSKMPALKFHPISTKKYPIFKLKNTFLKEPNLGVIINAANEVGVYNFLENKSGFLDIAKCIFKALDHFGVPKISSIEEVFEYDFKTREYLRS.

Threonine 7, glycine 8, serine 9, isoleucine 10, glycine 31, asparagine 33, and asparagine 111 together coordinate NADPH. Lysine 112 lines the 1-deoxy-D-xylulose 5-phosphate pocket. Residue glutamate 113 participates in NADPH binding. Mn(2+) is bound at residue aspartate 131. Residues serine 132, glutamate 133, serine 155, and histidine 178 each contribute to the 1-deoxy-D-xylulose 5-phosphate site. Glutamate 133 is a Mn(2+) binding site. Glycine 184 contacts NADPH. The 1-deoxy-D-xylulose 5-phosphate site is built by serine 191, asparagine 196, lysine 197, and glutamate 200. Glutamate 200 lines the Mn(2+) pocket.

It belongs to the DXR family. The cofactor is Mg(2+). Requires Mn(2+) as cofactor.

It catalyses the reaction 2-C-methyl-D-erythritol 4-phosphate + NADP(+) = 1-deoxy-D-xylulose 5-phosphate + NADPH + H(+). The protein operates within isoprenoid biosynthesis; isopentenyl diphosphate biosynthesis via DXP pathway; isopentenyl diphosphate from 1-deoxy-D-xylulose 5-phosphate: step 1/6. Functionally, catalyzes the NADPH-dependent rearrangement and reduction of 1-deoxy-D-xylulose-5-phosphate (DXP) to 2-C-methyl-D-erythritol 4-phosphate (MEP). The chain is 1-deoxy-D-xylulose 5-phosphate reductoisomerase from Campylobacter jejuni subsp. jejuni serotype O:6 (strain 81116 / NCTC 11828).